Reading from the N-terminus, the 103-residue chain is Phorbol-12-myristate-13-acetate-induced protein 1 (103 aa).

2 consecutive short sequence motifs (BH3) follow at residues 27–35 and 78–86; these read LRKIGDKVY and LRRIGDKVN. The tract at residues 90-99 is required for mitochondrial location; the sequence is KLLNLISKLF.

Belongs to the PMAIP1 family. In terms of assembly, interacts with MCL1. Interacts with BCL2A1. Interacts with BAX. Interacts with BCL2L10. As to expression, detected in thymocytes after irradiation with X-rays. Not detectable in untreated thymocytes (at protein level). Detected in embryonic neural precursor cells of the telencephalon Constitutively expressed at low levels in adult brain, testis, thymus, spleen, lung and kidney.

It is found in the mitochondrion. Functionally, promotes activation of caspases and apoptosis. Promotes mitochondrial membrane changes and efflux of apoptogenic proteins from the mitochondria. Contributes to p53/TP53-dependent apoptosis after radiation exposure. Promotes proteasomal degradation of MCL1. Competes with BIM/BCL2L11 for binding to MCL1 and can displace BIM/BCL2L11 from its binding site on MCL1. Competes with BAK1 for binding to MCL1 and can displace BAK1 from its binding site on MCL1. The polypeptide is Phorbol-12-myristate-13-acetate-induced protein 1 (Pmaip1) (Mus musculus (Mouse)).